Here is a 356-residue protein sequence, read N- to C-terminus: C-X-C chemokine receptor type 2 (356 aa).

The Extracellular portion of the chain corresponds to 1 to 46 (MEYINWDNYSLEDLFGDIDNYTYNTEMPIIPADSAPCRPESLDINK). N8 and N20 each carry an N-linked (GlcNAc...) asparagine glycan. The chain crosses the membrane as a helical span at residues 47-73 (YAVVVIYVLVFVLNLLGNSLVIMVVLY). The Cytoplasmic portion of the chain corresponds to 74–82 (SRVSHSVTD). Residues 83–103 (VYLLNLAIADLLFALTLPIWA) traverse the membrane as a helical segment. Residues 104-118 (VSKVKGWIFGTPLCK) are Extracellular-facing. A disulfide bridge links C117 with C194. The chain crosses the membrane as a helical span at residues 119-140 (IVSLLKEVNFYSGILLLASISM). The Cytoplasmic portion of the chain corresponds to 141 to 161 (DRYLAIVHATRRLTQKKHWVK). Residues 162 to 181 (FICLGIWALSLILSLPIFVF) form a helical membrane-spanning segment. The Extracellular segment spans residues 182 to 206 (RRAINPPYSSPVCYEDMGTNTTKLR). A helical membrane pass occupies residues 207-229 (IVMRALPQTFGFIVPLMIMLFCY). The Cytoplasmic segment spans residues 230–249 (GLTLRTLFEAHMGQKHRAMR). A helical membrane pass occupies residues 250–269 (VIFAVVLVFLLCWLPYNLVA). At 270–290 (DTLMRLQAIEETCQRRNDIGR) the chain is on the extracellular side. A helical transmembrane segment spans residues 291–311 (ALDATEILGFFHSCLNPLIYA). The Cytoplasmic portion of the chain corresponds to 312–356 (FIGQKFRHGLLKIMAFHGLISKEYLPKDSRPSFVGSSSANTSTTF).

The protein belongs to the G-protein coupled receptor 1 family. As to quaternary structure, interacts with IL8. Interacts with GNAI2. In terms of processing, phosphorylated upon ligand binding; which is required for desensitization.

The protein resides in the cell membrane. Receptor for interleukin-8 which is a powerful neutrophil chemotactic factor. Binding of IL-8 to the receptor causes activation of neutrophils. This response is mediated via a G-protein that activates a phosphatidylinositol-calcium second messenger system. Binds to IL-8 with high affinity. Also binds with high affinity to CXCL3, GRO/MGSA and NAP-2. The protein is C-X-C chemokine receptor type 2 (CXCR2) of Canis lupus familiaris (Dog).